The primary structure comprises 1024 residues: Carbamoyl phosphate synthase large chain (1024 aa).

The tract at residues 1 to 402 is carboxyphosphate synthetic domain; that stretch reads MPKRTDLQTI…SLQKALRSTE (402 aa). ATP is bound by residues Arg-129, Arg-169, Gly-175, Gly-176, Glu-208, Ile-210, Glu-215, Gly-241, Val-242, His-243, Gln-285, and Glu-299. In terms of domain architecture, ATP-grasp 1 spans 133–328; it reads QAAMKKIGVE…IAKIAALLAV (196 aa). Mg(2+)-binding residues include Gln-285, Glu-299, and Asn-301. Residues Gln-285, Glu-299, and Asn-301 each coordinate Mn(2+). The segment at 403-546 is oligomerization domain; it reads GDIRGVYAEM…YSTYEWEDEV (144 aa). The tract at residues 547–929 is carbamoyl phosphate synthetic domain; the sequence is APTDKPKVVI…AFYRAQLGAK (383 aa). Residues 671 to 863 enclose the ATP-grasp 2 domain; it reads NALCERLGLP…LAKSAARIAA (193 aa). ATP contacts are provided by Arg-707, Gln-747, Leu-749, Glu-754, Gly-779, Val-780, His-781, Ser-782, Gln-822, and Glu-834. The Mg(2+) site is built by Gln-822, Glu-834, and Asn-836. 3 residues coordinate Mn(2+): Gln-822, Glu-834, and Asn-836. Residues 930–1024 enclose the MGS-like domain; it reads NYLPLEGTAL…GVRSLQEWVK (95 aa). Residues 930–1024 form an allosteric domain region; sequence NYLPLEGTAL…GVRSLQEWVK (95 aa).

This sequence belongs to the CarB family. As to quaternary structure, composed of two chains; the small (or glutamine) chain promotes the hydrolysis of glutamine to ammonia, which is used by the large (or ammonia) chain to synthesize carbamoyl phosphate. Tetramer of heterodimers (alpha,beta)4. It depends on Mg(2+) as a cofactor. Mn(2+) is required as a cofactor.

The catalysed reaction is hydrogencarbonate + L-glutamine + 2 ATP + H2O = carbamoyl phosphate + L-glutamate + 2 ADP + phosphate + 2 H(+). The enzyme catalyses hydrogencarbonate + NH4(+) + 2 ATP = carbamoyl phosphate + 2 ADP + phosphate + 2 H(+). The protein operates within amino-acid biosynthesis; L-arginine biosynthesis; carbamoyl phosphate from bicarbonate: step 1/1. It functions in the pathway pyrimidine metabolism; UMP biosynthesis via de novo pathway; (S)-dihydroorotate from bicarbonate: step 1/3. Functionally, large subunit of the glutamine-dependent carbamoyl phosphate synthetase (CPSase). CPSase catalyzes the formation of carbamoyl phosphate from the ammonia moiety of glutamine, carbonate, and phosphate donated by ATP, constituting the first step of 2 biosynthetic pathways, one leading to arginine and/or urea and the other to pyrimidine nucleotides. The large subunit (synthetase) binds the substrates ammonia (free or transferred from glutamine from the small subunit), hydrogencarbonate and ATP and carries out an ATP-coupled ligase reaction, activating hydrogencarbonate by forming carboxy phosphate which reacts with ammonia to form carbamoyl phosphate. This chain is Carbamoyl phosphate synthase large chain, found in Deinococcus radiodurans (strain ATCC 13939 / DSM 20539 / JCM 16871 / CCUG 27074 / LMG 4051 / NBRC 15346 / NCIMB 9279 / VKM B-1422 / R1).